The chain runs to 314 residues: Beta-lactamase 2 (314 aa).

The N-terminal stretch at Met-1 to Gly-26 is a signal peptide. Low complexity predominate over residues Asp-32 to Ala-47. Positions Asp-32–Gly-51 are disordered. The active-site Acyl-ester intermediate is Ser-96. Residue Lys-258–Gly-260 coordinates substrate.

It belongs to the class-A beta-lactamase family.

The catalysed reaction is a beta-lactam + H2O = a substituted beta-amino acid. The polypeptide is Beta-lactamase 2 (blaU) (Streptomyces cacaoi).